Here is a 171-residue protein sequence, read N- to C-terminus: Peptide methionine sulfoxide reductase MsrA (171 aa).

C13 is a catalytic residue.

It belongs to the MsrA Met sulfoxide reductase family.

It carries out the reaction L-methionyl-[protein] + [thioredoxin]-disulfide + H2O = L-methionyl-(S)-S-oxide-[protein] + [thioredoxin]-dithiol. The catalysed reaction is [thioredoxin]-disulfide + L-methionine + H2O = L-methionine (S)-S-oxide + [thioredoxin]-dithiol. In terms of biological role, has an important function as a repair enzyme for proteins that have been inactivated by oxidation. Catalyzes the reversible oxidation-reduction of methionine sulfoxide in proteins to methionine. This is Peptide methionine sulfoxide reductase MsrA from Mycobacterium ulcerans (strain Agy99).